A 494-amino-acid polypeptide reads, in one-letter code: Endoglucanase 1 (494 aa).

Positions 1-25 (MDCSSPLSLFHLLLVCTVMVKCCSA) are cleaved as a signal peptide. Asp-82 (nucleophile) is an active-site residue. Asn-254 and Asn-359 each carry an N-linked (GlcNAc...) asparagine glycan. Catalysis depends on residues His-411, Asp-462, and Glu-471.

This sequence belongs to the glycosyl hydrolase 9 (cellulase E) family.

The enzyme catalyses Endohydrolysis of (1-&gt;4)-beta-D-glucosidic linkages in cellulose, lichenin and cereal beta-D-glucans.. In terms of biological role, involved in ripening fruit process. The polypeptide is Endoglucanase 1 (CEL1) (Persea americana (Avocado)).